Consider the following 835-residue polypeptide: Protein translocase subunit SecA (835 aa).

ATP-binding positions include Gln85, 103–107 (GEGKT), and Asp492. Positions 819, 821, 830, and 831 each coordinate Zn(2+).

The protein belongs to the SecA family. In terms of assembly, monomer and homodimer. Part of the essential Sec protein translocation apparatus which comprises SecA, SecYEG and auxiliary proteins SecDF. Other proteins may also be involved. The cofactor is Zn(2+).

Its subcellular location is the cell membrane. The protein resides in the cytoplasm. The catalysed reaction is ATP + H2O + cellular proteinSide 1 = ADP + phosphate + cellular proteinSide 2.. Part of the Sec protein translocase complex. Interacts with the SecYEG preprotein conducting channel. Has a central role in coupling the hydrolysis of ATP to the transfer of proteins into and across the cell membrane, serving as an ATP-driven molecular motor driving the stepwise translocation of polypeptide chains across the membrane. The sequence is that of Protein translocase subunit SecA from Clostridium botulinum (strain ATCC 19397 / Type A).